Consider the following 436-residue polypeptide: Prenyltransferase nscD (436 aa).

Belongs to the tryptophan dimethylallyltransferase family.

It functions in the pathway secondary metabolite biosynthesis. Prenyltransferase; part of the gene cluster that mediates the biosynthesis of neosartoricin B, a prenylated anthracenone that probably exhibits T-cell antiproliferative activity, suggestive of a physiological role as an immunosuppressive agent. The non-reducing polyketide synthase nscA probably synthesizes and cyclizes the decaketide backbone. The hydrolase nscB then mediates the product release through hydrolysis followed by spontaneous decarboxylation. The prenyltransferase nscD catalyzes the addition of the dimethylallyl group to the aromatic C5. The FAD-dependent monooxygenase nscC is then responsible for the stereospecific hydroxylation at C2. Neosartoricin B can be converted into two additional compounds neosartoricins C and D. Neosartoricin C is a spirocyclic compound that is cyclized through the attack of C3 hydroxyl on C14, followed by dehydration. On the other hand, neosartoricin D is a further cyclized compound in which attack of C2 on C14 in neosartoricin C results in the formation of the acetal-containing dioxabicyclo-octanone ring. Both of these compounds are novel and possibly represent related metabolites of the gene cluster. This chain is Prenyltransferase nscD, found in Trichophyton rubrum (strain ATCC MYA-4607 / CBS 118892) (Athlete's foot fungus).